A 117-amino-acid chain; its full sequence is Large ribosomal subunit protein bL20 (117 aa).

This sequence belongs to the bacterial ribosomal protein bL20 family.

Functionally, binds directly to 23S ribosomal RNA and is necessary for the in vitro assembly process of the 50S ribosomal subunit. It is not involved in the protein synthesizing functions of that subunit. The sequence is that of Large ribosomal subunit protein bL20 from Rickettsia africae (strain ESF-5).